Reading from the N-terminus, the 316-residue chain is Beta-ketoacyl-[acyl-carrier-protein] synthase III (316 aa).

Catalysis depends on residues cysteine 112 and histidine 243. The segment at 244-248 (QANLR) is ACP-binding. Residue asparagine 273 is part of the active site.

It belongs to the thiolase-like superfamily. FabH family. Homodimer.

Its subcellular location is the cytoplasm. It carries out the reaction malonyl-[ACP] + acetyl-CoA + H(+) = 3-oxobutanoyl-[ACP] + CO2 + CoA. It participates in lipid metabolism; fatty acid biosynthesis. In terms of biological role, catalyzes the condensation reaction of fatty acid synthesis by the addition to an acyl acceptor of two carbons from malonyl-ACP. Catalyzes the first condensation reaction which initiates fatty acid synthesis and may therefore play a role in governing the total rate of fatty acid production. Possesses both acetoacetyl-ACP synthase and acetyl transacylase activities. Its substrate specificity determines the biosynthesis of branched-chain and/or straight-chain of fatty acids. In Yersinia pseudotuberculosis serotype O:1b (strain IP 31758), this protein is Beta-ketoacyl-[acyl-carrier-protein] synthase III.